Here is a 436-residue protein sequence, read N- to C-terminus: MGFQNEASSSSYTLKIPPPAREDSPLLGKGPPLSSQFKTFANVFIAVVGAGVLGLPYAFKRTGWLMGVLLLVSVSVLTHHCMMLLVYTRRKLDSFNAGISKIGSFGDLGFAVCGSLGRIVVDLFIILSQAGFCVGYLIFIGTTLANLSDPESPTSLRHQFTRLGSEFLGVSSKSLYIWGCFPFQLGLNSIKTLTHLAPLSIFADIVDLGAMAVVIVEDSMIILKQRPDVVAFGGMSLFLYGMGVAVYSFEGVGMVLPLESEMKDKDKFGKVLALGMGFISLIYIAFGILGYLAFGEDTMDIITANLGAGLVSTVVQLGLCINLFFTFPLMMNPVFEIVERRFSRGMYSAWLRWVLVLAVTLVALFVPNFADFLSLVGSSTCCVLGFVLPALFHLLVFKEEMGWLQWSSDTAIVVLGVVLAVSGTWSSLSEIFSVKV.

Over residues 1-13 the composition is skewed to polar residues; it reads MGFQNEASSSSYT. The tract at residues 1-21 is disordered; that stretch reads MGFQNEASSSSYTLKIPPPAR. Over 1–38 the chain is Cytoplasmic; it reads MGFQNEASSSSYTLKIPPPAREDSPLLGKGPPLSSQFK. The chain crosses the membrane as a helical span at residues 39-59; the sequence is TFANVFIAVVGAGVLGLPYAF. Residues 60-65 lie on the Vacuolar side of the membrane; that stretch reads KRTGWL. A helical membrane pass occupies residues 66-86; the sequence is MGVLLLVSVSVLTHHCMMLLV. The Cytoplasmic portion of the chain corresponds to 87 to 118; the sequence is YTRRKLDSFNAGISKIGSFGDLGFAVCGSLGR. The chain crosses the membrane as a helical span at residues 119 to 139; the sequence is IVVDLFIILSQAGFCVGYLIF. The Vacuolar segment spans residues 140-166; it reads IGTTLANLSDPESPTSLRHQFTRLGSE. The helical transmembrane segment at 167–187 threads the bilayer; sequence FLGVSSKSLYIWGCFPFQLGL. At 188–195 the chain is on the cytoplasmic side; it reads NSIKTLTH. Residues 196-216 form a helical membrane-spanning segment; that stretch reads LAPLSIFADIVDLGAMAVVIV. Over 217-228 the chain is Vacuolar; it reads EDSMIILKQRPD. A helical transmembrane segment spans residues 229–249; sequence VVAFGGMSLFLYGMGVAVYSF. Over 250-273 the chain is Cytoplasmic; it reads EGVGMVLPLESEMKDKDKFGKVLA. Residues 274–294 traverse the membrane as a helical segment; it reads LGMGFISLIYIAFGILGYLAF. Topologically, residues 295–309 are vacuolar; that stretch reads GEDTMDIITANLGAG. The chain crosses the membrane as a helical span at residues 310-330; sequence LVSTVVQLGLCINLFFTFPLM. Residues 331 to 352 are Cytoplasmic-facing; that stretch reads MNPVFEIVERRFSRGMYSAWLR. The chain crosses the membrane as a helical span at residues 353–373; it reads WVLVLAVTLVALFVPNFADFL. Residues 374–376 lie on the Vacuolar side of the membrane; the sequence is SLV. Residues 377–397 traverse the membrane as a helical segment; sequence GSSTCCVLGFVLPALFHLLVF. Over 398–411 the chain is Cytoplasmic; the sequence is KEEMGWLQWSSDTA. A helical membrane pass occupies residues 412-432; the sequence is IVVLGVVLAVSGTWSSLSEIF. At 433 to 436 the chain is on the vacuolar side; it reads SVKV.

It belongs to the amino acid/polyamine transporter 2 family. Amino acid/auxin permease (AAAP) (TC 2.A.18.8) subfamily. As to expression, ubiquitous.

The protein localises to the vacuole membrane. Functionally, translocates preferentially neutral amino acids from the vacuole to the cytoplasm. This Arabidopsis thaliana (Mouse-ear cress) protein is Amino acid transporter AVT3C.